The chain runs to 380 residues: MAPNLRKSHPLLKMINNSLIDLPTPSNISAWWNFGSLLGLCLVTQILTGLLLATHYTADTTLAFSSVTHTCRNVQYGWLIRNLHANGASFFFICIYLHIGRGLYYGSYLYKETWNTGILLLLTLMATAFVGYVLPWGQMSFWGATVITNLFSAIPYIGQTIVEWAWGGFSVDNPTLTRFFALHFLLPFMIAGLTLIHLTFLHESGSNNPLGLVSNCDKIPFHPYFSLKDTLGFMFMLFLLTTLALFSPNLLGDPENFTPANPLVTPPHIKPEWYFLFAYAILRSIPNKLGGVLALAASVLILFLSPLLHKSKQRTMAFRPFSQFLFWLLIANLLILTWVGSQPVEHPFIIIGQLASLTYFTILLILLPITGALENKMLNY.

4 consecutive transmembrane segments (helical) span residues 34–54 (FGSLLGLCLVTQILTGLLLAT), 78–99 (WLIRNLHANGASFFFICIYLHI), 114–134 (WNTGILLLLTLMATAFVGYVL), and 179–199 (FFALHFLLPFMIAGLTLIHLT). Positions 84 and 98 each coordinate heme b. Residues H183 and H197 each contribute to the heme b site. H202 contacts a ubiquinone. Transmembrane regions (helical) follow at residues 227–247 (LKDTLGFMFMLFLLTTLALFS), 289–309 (LGGVLALAASVLILFLSPLLH), 321–341 (FSQFLFWLLIANLLILTWVGS), and 348–368 (FIIIGQLASLTYFTILLILLP).

The protein belongs to the cytochrome b family. The cytochrome bc1 complex contains 11 subunits: 3 respiratory subunits (MT-CYB, CYC1 and UQCRFS1), 2 core proteins (UQCRC1 and UQCRC2) and 6 low-molecular weight proteins (UQCRH/QCR6, UQCRB/QCR7, UQCRQ/QCR8, UQCR10/QCR9, UQCR11/QCR10 and a cleavage product of UQCRFS1). This cytochrome bc1 complex then forms a dimer. The cofactor is heme b.

The protein resides in the mitochondrion inner membrane. Functionally, component of the ubiquinol-cytochrome c reductase complex (complex III or cytochrome b-c1 complex) that is part of the mitochondrial respiratory chain. The b-c1 complex mediates electron transfer from ubiquinol to cytochrome c. Contributes to the generation of a proton gradient across the mitochondrial membrane that is then used for ATP synthesis. The protein is Cytochrome b (MT-CYB) of Garrodia nereis (Grey-backed storm-petrel).